A 408-amino-acid polypeptide reads, in one-letter code: MKYNIVLKFEVEGIVDKPDVIGAIFGQTENLFGEEFDLRELQDKGRLGRIYVNINTSKNKTEGEIIIPSNLDRIETALIAAMVENVDKVGPYNARFKLVEIQDIREEKIKKIIDRAKEILGTWTKEKTLDIKEVIYEISSAVKTGEIIEYGPDRLPAGPDVDKDPELIIVEGRADVINLLRYGYKNVIAIEGATGKIPQTIIDLAKQKKTVIAFLDGDHGGDLILKELLANNVKIDYVARAPTGKEVEELTGKEINKSLANMMTVAQYMKKQQEAQQALKEALAPESQPPIVVSKPTTPEQIKEITIKIPQHIIEEIKKLPGTLEGIMFDENWNPIERIQVRDIVQRLENLTDNQNISYIIFDGVITQRLLDLASAKNIKLLVGARIGGISKRPKNVEILTMTDLFTS.

Residues 165 to 243 (PELIIVEGRA…KIDYVARAPT (79 aa)) form the Toprim domain. Positions 171, 216, and 218 each coordinate Mg(2+).

The protein belongs to the archaeal DnaG primase family. As to quaternary structure, forms a ternary complex with MCM helicase and DNA. Component of the archaeal exosome complex. Mg(2+) serves as cofactor.

The enzyme catalyses ssDNA + n NTP = ssDNA/pppN(pN)n-1 hybrid + (n-1) diphosphate.. Its function is as follows. RNA polymerase that catalyzes the synthesis of short RNA molecules used as primers for DNA polymerase during DNA replication. Also part of the exosome, which is a complex involved in RNA degradation. Acts as a poly(A)-binding protein that enhances the interaction between heteromeric, adenine-rich transcripts and the exosome. In Sulfurisphaera tokodaii (strain DSM 16993 / JCM 10545 / NBRC 100140 / 7) (Sulfolobus tokodaii), this protein is DNA primase DnaG.